Here is a 345-residue protein sequence, read N- to C-terminus: Probable G-protein coupled receptor 139 (345 aa).

At 1–21 the chain is on the extracellular side; that stretch reads MEHTHAHLAANSSACGLGFVP. N-linked (GlcNAc...) asparagine glycosylation occurs at Asn-11. A helical transmembrane segment spans residues 22-42; the sequence is VVYYSFLLCLGLPANILTVII. Residues 43–57 lie on the Cytoplasmic side of the membrane; it reads LSQLVARRQKSSYNY. Residues 58-78 form a helical membrane-spanning segment; sequence LLALAAADILVLFFIVFVDFL. At 79–94 the chain is on the extracellular side; that stretch reads LEDFILTMQMPLIPDK. A helical transmembrane segment spans residues 95–115; the sequence is IIEVLEFSSIHTSIWITVPLT. Topologically, residues 116–140 are cytoplasmic; sequence VDRYIAVCHPLKYHTVSYPARTRKV. A helical transmembrane segment spans residues 141–161; that stretch reads ILSVYITCFLTSIPYYWWPNI. Residues 162–173 lie on the Extracellular side of the membrane; sequence WTEDYISTSMHH. The chain crosses the membrane as a helical span at residues 174 to 194; it reads VLVWIHCFTVYLVPCSIFFIL. Residues 195–220 lie on the Cytoplasmic side of the membrane; sequence NSIIVYKLRRKSNFRLRGYSTGKTTA. The chain crosses the membrane as a helical span at residues 221-241; sequence ILFTITSIFATLWAPRIIMIL. Topologically, residues 242-260 are extracellular; sequence YHLYGAPIQNPWLVHIMLD. The chain crosses the membrane as a helical span at residues 261–281; it reads VANMLALLNTAINFFLYCFIS. At 282-345 the chain is on the cytoplasmic side; sequence KRFRTMAAAT…KHGKPIKVSP (64 aa).

The protein belongs to the G-protein coupled receptor 1 family. As to expression, expressed almost exclusively in the brain. Abundantly expressed in the ventrolateral region of caudate putamen, the habenular nucleus, the zona incerta, and the medial mammillary nucleus.

The protein resides in the cell membrane. Its function is as follows. Orphan receptor. Seems to act through a G(q/11)-mediated pathway. This Mus musculus (Mouse) protein is Probable G-protein coupled receptor 139 (Gpr139).